Consider the following 237-residue polypeptide: NAD-dependent protein deacetylase (237 aa).

Residues 1–237 (MFTTSLRQAQ…LVETNRALQK (237 aa)) form the Deacetylase sirtuin-type domain. Ala18, Thr22, Phe29, Arg30, Gln95, Asp98, and His113 together coordinate NAD(+). Phe29 is a nicotinamide binding site. Asp98 serves as a coordination point for nicotinamide. His113 acts as the Proton acceptor in catalysis. Cys121, Cys124, Cys140, and Cys142 together coordinate Zn(2+). NAD(+)-binding residues include Ser180, Ser181, Asn205, and Ile224.

It belongs to the sirtuin family. Class U subfamily. It depends on Zn(2+) as a cofactor.

It is found in the cytoplasm. The enzyme catalyses N(6)-acetyl-L-lysyl-[protein] + NAD(+) + H2O = 2''-O-acetyl-ADP-D-ribose + nicotinamide + L-lysyl-[protein]. Its function is as follows. NAD-dependent protein deacetylase which modulates the activities of several enzymes which are inactive in their acetylated form. This chain is NAD-dependent protein deacetylase, found in Shouchella clausii (strain KSM-K16) (Alkalihalobacillus clausii).